The sequence spans 805 residues: Mediator of RNA polymerase II transcription subunit 25 (805 aa).

Disordered regions lie at residues 308 to 332 (NQMPPTSAVGTPFNQPPPPAMPQNT) and 647 to 691 (QQPQ…NPQL). Low complexity predominate over residues 647–678 (QQPQQAASQAPPQATQTTVQAPGQPQNPQPGA). The LXXLL motif signature appears at 691–695 (LRNLL).

This sequence belongs to the Mediator complex subunit 25 family. Component of the Mediator complex.

It localises to the nucleus. In terms of biological role, component of the Mediator complex, a coactivator involved in the regulated transcription of nearly all RNA polymerase II-dependent genes. Mediator functions as a bridge to convey information from gene-specific regulatory proteins to the basal RNA polymerase II transcription machinery. Mediator is recruited to promoters by direct interactions with regulatory proteins and serves as a scaffold for the assembly of a functional preinitiation complex with RNA polymerase II and the general transcription factors. In Xenopus tropicalis (Western clawed frog), this protein is Mediator of RNA polymerase II transcription subunit 25 (med25).